The sequence spans 436 residues: Nucleolar protein 4-like (436 aa).

The interval 1–184 (MSDSTWMSAD…KMNDSEGMDP (184 aa)) is disordered. Positions 41–61 (SESGSGNGSSTLNPSTSSSTQ) are enriched in low complexity. Serine 130 carries the post-translational modification Phosphoserine. Acidic residues predominate over residues 160–169 (ADDDDDDHDD). Positions 170 to 184 (HEDNDKMNDSEGMDP) are enriched in basic and acidic residues. Phosphoserine is present on serine 295. The span at 351 to 366 (QPPASLQTGNHSNGPT) shows a compositional bias: polar residues. Positions 351–400 (QPPASLQTGNHSNGPTDLSMKGGASTTSTTPTPTPSSTSTSRPVPTAQLS) are disordered. Positions 375-396 (STTSTTPTPTPSSTSTSRPVPT) are enriched in low complexity.

The sequence is that of Nucleolar protein 4-like (NOL4L) from Pongo abelii (Sumatran orangutan).